Consider the following 395-residue polypeptide: Succinyl-diaminopimelate desuccinylase 2 (395 aa).

A Zn(2+)-binding site is contributed by histidine 79. Residue aspartate 81 is part of the active site. Aspartate 112 is a Zn(2+) binding site. The Proton acceptor role is filled by glutamate 145. Glutamate 146, glutamate 174, and histidine 363 together coordinate Zn(2+).

The protein belongs to the peptidase M20A family. DapE subfamily. Homodimer. Zn(2+) serves as cofactor. Co(2+) is required as a cofactor.

It catalyses the reaction N-succinyl-(2S,6S)-2,6-diaminopimelate + H2O = (2S,6S)-2,6-diaminopimelate + succinate. The protein operates within amino-acid biosynthesis; L-lysine biosynthesis via DAP pathway; LL-2,6-diaminopimelate from (S)-tetrahydrodipicolinate (succinylase route): step 3/3. Functionally, catalyzes the hydrolysis of N-succinyl-L,L-diaminopimelic acid (SDAP), forming succinate and LL-2,6-diaminopimelate (DAP), an intermediate involved in the bacterial biosynthesis of lysine and meso-diaminopimelic acid, an essential component of bacterial cell walls. This chain is Succinyl-diaminopimelate desuccinylase 2, found in Ruegeria sp. (strain TM1040) (Silicibacter sp.).